The primary structure comprises 241 residues: NEP1-interacting protein 2 (241 aa).

Positions 1-20 are disordered; it reads MASSSSSSYRFQSGSYPLSS. The Lumenal, thylakoid portion of the chain corresponds to 1–36; the sequence is MASSSSSSYRFQSGSYPLSSSPSLGNFVERIKDACH. A helical transmembrane segment spans residues 37-57; it reads FLVSAVLGTIISAILTFFFAL. Over 58–76 the chain is Stromal; the sequence is VGTLLGALTGALIGQETES. Residues 77–97 form a helical membrane-spanning segment; the sequence is GFIRGAAIGAISGAVFSIEVF. At 98–109 the chain is on the lumenal, thylakoid side; sequence ESSLDLWKSDES. The chain crosses the membrane as a helical span at residues 110 to 130; it reads GFGCFLYLIDVIVSLLSGRLV. At 131 to 241 the chain is on the stromal side; the sequence is RERIGPAMLS…GSCPMCRRDI (111 aa). An RING-type; atypical zinc finger spans residues 196 to 238; that stretch reads CSVCLQDFQLGETVRSLPHCHHMFHLPCIDNWLLRHGSCPMCR.

Belongs to the RING-type zinc finger family. NIP subfamily. In terms of assembly, interacts with RPOT2.

Its subcellular location is the plastid. It is found in the chloroplast thylakoid membrane. In terms of biological role, intrinsic thylakoid membrane protein that fixes RPOT2 on the stromal side of the thylakoid membrane. In Arabidopsis thaliana (Mouse-ear cress), this protein is NEP1-interacting protein 2 (NIP2).